Consider the following 95-residue polypeptide: UPF0235 protein A2cp1_1215 (95 aa).

This sequence belongs to the UPF0235 family.

The sequence is that of UPF0235 protein A2cp1_1215 from Anaeromyxobacter dehalogenans (strain 2CP-1 / ATCC BAA-258).